A 567-amino-acid polypeptide reads, in one-letter code: Urease subunit alpha (567 aa).

Positions 129 to 567 (GGVDSHIHFI…LPLAQRYFLF (439 aa)) constitute a Urease domain. Positions 134, 136, and 217 each coordinate Ni(2+). Lys-217 is subject to N6-carboxylysine. Residue His-219 participates in substrate binding. 2 residues coordinate Ni(2+): His-246 and His-272. His-320 functions as the Proton donor in the catalytic mechanism. Residue Asp-360 coordinates Ni(2+).

The protein belongs to the metallo-dependent hydrolases superfamily. Urease alpha subunit family. As to quaternary structure, heterotrimer of UreA (gamma), UreB (beta) and UreC (alpha) subunits. Three heterotrimers associate to form the active enzyme. Requires Ni cation as cofactor. In terms of processing, carboxylation allows a single lysine to coordinate two nickel ions.

Its subcellular location is the cytoplasm. The catalysed reaction is urea + 2 H2O + H(+) = hydrogencarbonate + 2 NH4(+). The protein operates within nitrogen metabolism; urea degradation; CO(2) and NH(3) from urea (urease route): step 1/1. This Pseudomonas putida (strain ATCC 700007 / DSM 6899 / JCM 31910 / BCRC 17059 / LMG 24140 / F1) protein is Urease subunit alpha.